Consider the following 234-residue polypeptide: Large ribosomal subunit protein uL1 (234 aa).

This sequence belongs to the universal ribosomal protein uL1 family. Part of the 50S ribosomal subunit.

Its function is as follows. Binds directly to 23S rRNA. The L1 stalk is quite mobile in the ribosome, and is involved in E site tRNA release. Functionally, protein L1 is also a translational repressor protein, it controls the translation of the L11 operon by binding to its mRNA. This Prochlorococcus marinus (strain SARG / CCMP1375 / SS120) protein is Large ribosomal subunit protein uL1.